The primary structure comprises 441 residues: Protein dcd1A (441 aa).

The signal sequence occupies residues 1–23 (MKIFNKLIFLIIQCILIISVTNA). N-linked (GlcNAc...) asparagine glycans are attached at residues N45, N261, N308, and N419.

It localises to the secreted. This is Protein dcd1A (dcd1A) from Dictyostelium discoideum (Social amoeba).